Here is a 494-residue protein sequence, read N- to C-terminus: MAGGGGELTAALLKKTAENGGEEKDELGLKQKVWIESKKLWIVAAPAIFTRFSTFGVSIISQSFIGHLGPIELAAYSITFTVLLRFSNGILLGMASALETLCGQAYGAKQNHMLGIYLQRSWIVLTGCTICLTPVYIFSGPILLALGQEERIVRVARIIALWVIGINFSFVPSFTCQMFLQAQSKNKIIAYVAAVSLGVHVFLSWLLMVHFNFGITGAMTSTLVAFWLPNIAQLLFVTCGGCKDTWRGFSMMAFKDLWPVFKLSMSSGGMLCLELWYNSILVLLTGNLKNAEVALDALAICLNINGLEMMIALGFLAAASVRVSNELGSGNPKGAKFATLTAVFTSLSLGIVLFFVFLFLRGRVSYIFTTSEAVAAEVADLSPLLAFSILMNSVQPVLSGVAVGAGWQGYVTYVNLACYYLVGIPIGIILGYVVGLQVKGVWIGMLFGIFVQTCVLTVMTLRTDWDQQVSTSLRRLNRWVVPESRDVNQVSSEE.

N-acetylalanine is present on Ala2. 12 consecutive transmembrane segments (helical) span residues 40-60 (LWIV…VSII), 73-95 (LAAY…LGMA), 123-143 (IVLT…GPIL), 158-178 (IIAL…TCQM), 188-208 (IIAY…WLLM), 217-237 (GAMT…LLFV), 268-288 (GGML…TGNL), 297-317 (ALAI…GFLA), 340-360 (LTAV…FLFL), 384-404 (LLAF…VAVG), 416-436 (LACY…VVGL), and 441-461 (VWIG…VMTL).

It belongs to the multi antimicrobial extrusion (MATE) (TC 2.A.66.1) family.

The protein resides in the membrane. This is Protein DETOXIFICATION 21 from Arabidopsis thaliana (Mouse-ear cress).